The chain runs to 235 residues: Regulator of G-protein signaling 9-binding protein (235 aa).

Residues 1-210 are Cytoplasmic-facing; sequence MAREECKALL…ERGGGCDPRK (210 aa). 2 coiled-coil regions span residues 29 to 54 and 144 to 169; these read GSADSQNLRQELQKTRQKAQELAVST and VADLRELEREVLQVGEMIDNMEMKVN. The segment at 153–200 is SNARE-like; sequence EVLQVGEMIDNMEMKVNVPRWTVQARQAAGAELLSTVSAGPSSVVSLQ. A helical; Anchor for type IV membrane protein membrane pass occupies residues 211–231; that stretch reads ALAAILFGAVLLAAVALAVCV. The Extracellular portion of the chain corresponds to 232-235; that stretch reads AKLS.

It belongs to the RGS7BP/RGS9BP family. In terms of assembly, specifically interacts with isoform RGS9-1 of RGS9. Component of the RGS9-1-Gbeta5 complex composed of RGS9-1, Gbeta5 (GNB5) and RGS9BP.

It localises to the membrane. Regulator of G protein-coupled receptor (GPCR) signaling in phototransduction. Participates in the recovery phase of visual transduction via its interaction with RGS9-1 isoform. Acts as a membrane-anchor that mediates the targeting of RGS9-1 to the photoreceptor outer segment, where phototransduction takes place. Enhances the ability of RGS9-1 to stimulate G protein GTPase activity, allowing the visual signal to be terminated on the physiologically time scale. It also controls the proteolytic stability of RGS9-1, probably by protecting it from degradation. The chain is Regulator of G-protein signaling 9-binding protein (RGS9BP) from Homo sapiens (Human).